Here is a 762-residue protein sequence, read N- to C-terminus: MSAALKLLEPLKYKAPCNPAYRAAQSVAHWHMGNITPHGGQTLPECNSSCHLARKVKNVGGTTLPRRTFTASSAHLGLEFNKASTLNASTLHPDSSSAGGGEEDVEVFDSFEGTRVFLKLRPEYQLHSYNRSDTHQPIAASEVELILHKVTFYQNKLQPEVITNYFYKLSSLPAEQNSVLLSSNSFALLCQLSVKNIQLFNTSDLISILKAFVDLRIPPSLSMLDVYETRFCHQVWEMTLDQLLLVADLWRNLGRRVPRFFKIFFSYLNLHWRELSLSQLIHLIYIIGENRQVPQDLMQRLESLILKYVDSVNLEEVGTICLGFFKSSSSLSEFVMRKIGDLACANMQHLSSHTLVHILKMFRFTHVDHIHFMKQFGEIAPQRIPSLGVQGVMHLTLACSALRILDERVMNAVAASLPPRVAHCRSKDVAKILWSFGTLNYKPPNTEEFYSSLINEIHRKMPEFNQYPEHLLTCLIGLAFSEYFPVEFINVALSPGFVKLAQERSKFELTKELFTLDGTVAIECPDYKGNRLNSHLQQETSANLWNLASKDMRSKPEFLETLYLLETMLGGPQYIKHHMILPHTRSSDLEVQLDANMKPMPFNSEATPTEDGAQLRFKQVGVSLTDDLMNQLLKGKAKRYFQGQIELETGQPPMELRKKTTVPLVNSGCNGTDRLGDGMVGLCPLAHMQPPLVKLAIQFTNKNQYCYGSRALLGLHNMKRRQLVQIGYRVVELPHWEWLPLLKRTRLEKLAYLHEKVFTSAL.

Ser95 is modified (phosphoserine). Lys506 carries the N6-acetyllysine modification. The region spanning 695-755 (LAIQFTNKNQ…RLEKLAYLHE (61 aa)) is the RAP domain.

The protein belongs to the FAST kinase family. Found in a complex with GRSF1, DDX28, DHX30 and FASTKD2. Associates with the 12S mitochondrial rRNA (12S mt-rRNA). As to expression, expression detected in spleen, testis, colon, heart, smooth muscle, kidney, brain, lung, liver, brown and white adipose tissue.

Its subcellular location is the mitochondrion matrix. It is found in the mitochondrion nucleoid. Plays an important role in the processing of non-canonical mitochondrial mRNA precursors. This chain is FAST kinase domain-containing protein 5, mitochondrial (Fastkd5), found in Mus musculus (Mouse).